Reading from the N-terminus, the 498-residue chain is 2-(3-amino-3-carboxypropyl)histidine synthase subunit 2 (498 aa).

[4Fe-4S] cluster is bound by residues C89, C110, and C341.

Belongs to the DPH1/DPH2 family. DPH2 subfamily. In terms of assembly, component of the 2-(3-amino-3-carboxypropyl)histidine synthase complex composed of dph1, dph2, dph3 and a NADH-dependent reductase. [4Fe-4S] cluster is required as a cofactor.

Its pathway is protein modification; peptidyl-diphthamide biosynthesis. Functionally, required for the first step of diphthamide biosynthesis, a post-translational modification of histidine which occurs in elongation factor 2. Dph1 and dph2 transfer a 3-amino-3-carboxypropyl (ACP) group from S-adenosyl-L-methionine (SAM) to a histidine residue, the reaction is assisted by a reduction system comprising dph3 and a NADH-dependent reductase. Facilitates the reduction of the catalytic iron-sulfur cluster found in the dph1 subunit. The sequence is that of 2-(3-amino-3-carboxypropyl)histidine synthase subunit 2 (dph2) from Danio rerio (Zebrafish).